Reading from the N-terminus, the 189-residue chain is UPF0301 protein PFL_5830 (189 aa).

Belongs to the UPF0301 (AlgH) family.

The protein is UPF0301 protein PFL_5830 of Pseudomonas fluorescens (strain ATCC BAA-477 / NRRL B-23932 / Pf-5).